The primary structure comprises 79 residues: Probable 26S proteasome complex subunit sem1 (79 aa).

Positions 1–21 (MSAPDKEKEKEKEETNNKSED) are enriched in basic and acidic residues. The interval 1–30 (MSAPDKEKEKEKEETNNKSEDLGLLEEDDE) is disordered. Ser19 carries the post-translational modification Phosphoserine.

The protein belongs to the DSS1/SEM1 family. As to quaternary structure, part of the 26S proteasome.

In terms of biological role, subunit of the 26S proteasome which plays a role in ubiquitin-dependent proteolysis. The sequence is that of Probable 26S proteasome complex subunit sem1 from Drosophila melanogaster (Fruit fly).